The following is a 71-amino-acid chain: MGITSAGMQSRDAECGERIFTRTVRQVKQQTTVHYFVSPPRPPVKTNPQAKTLISTRLEVATRKKRRVLFI.

The protein is Protein YqgC (yqgC) of Escherichia coli (strain K12).